We begin with the raw amino-acid sequence, 280 residues long: Chlorophyll a-b binding protein CP26, chloroplastic (280 aa).

Residues M1–K48 constitute a chloroplast transit peptide. Chlorophyll b is bound at residue F70. The chlorophyll a site is built by Y95, E114, and H117. Helical transmembrane passes span Y110 to I130 and I167 to Y187. Residues R119, I167, E186, and R189 each coordinate chlorophyll b. 6 residues coordinate chlorophyll a: K224, E225, N228, R230, Q242, and H257. The chain crosses the membrane as a helical span at residues L231–V251.

The protein belongs to the light-harvesting chlorophyll a/b-binding (LHC) protein family. In terms of assembly, forms heterotrimers with LHCB3. The LHC complex consists of chlorophyll a-b binding proteins. Requires Binds at least 14 chlorophylls (8 Chl-a and 6 Chl-b) and carotenoids such as lutein and neoxanthin. as cofactor. Photoregulated by reversible phosphorylation of its threonine residues.

It localises to the plastid. It is found in the chloroplast thylakoid membrane. Functionally, the light-harvesting complex (LHC) functions as a light receptor, it captures and delivers excitation energy to photosystems with which it is closely associated. In Arabidopsis thaliana (Mouse-ear cress), this protein is Chlorophyll a-b binding protein CP26, chloroplastic (LHCB5).